The following is a 532-amino-acid chain: Putative cysteine ligase BshC (532 aa).

Positions M431–R451 form a coiled coil.

Belongs to the BshC family.

The sequence is that of Putative cysteine ligase BshC from Koribacter versatilis (strain Ellin345).